The chain runs to 265 residues: Ribosomal RNA small subunit methyltransferase G (265 aa).

S-adenosyl-L-methionine is bound by residues Gly75, Leu80, and Arg145. Residues 212–265 (RAVRSSQRTRAESRGGRGDGERHDGRQVRRTSRDSLRSREVGRDQPTRGQSRST) form a disordered region. Residues 220–257 (TRAESRGGRGDGERHDGRQVRRTSRDSLRSREVGRDQP) are compositionally biased toward basic and acidic residues.

This sequence belongs to the methyltransferase superfamily. RNA methyltransferase RsmG family.

Its subcellular location is the cytoplasm. Specifically methylates the N7 position of guanine in position 518 of 16S rRNA. The sequence is that of Ribosomal RNA small subunit methyltransferase G from Frankia casuarinae (strain DSM 45818 / CECT 9043 / HFP020203 / CcI3).